Consider the following 273-residue polypeptide: NADPH-dependent 7-cyano-7-deazaguanine reductase (273 aa).

Residue 81–83 coordinates substrate; that stretch reads VES. 83–84 contacts NADPH; the sequence is SK. C179 serves as the catalytic Thioimide intermediate. Catalysis depends on D186, which acts as the Proton donor. 218 to 219 lines the substrate pocket; sequence AE. 247–248 contributes to the NADPH binding site; the sequence is RG.

The protein belongs to the GTP cyclohydrolase I family. QueF type 2 subfamily. In terms of assembly, homodimer.

It is found in the cytoplasm. It carries out the reaction 7-aminomethyl-7-carbaguanine + 2 NADP(+) = 7-cyano-7-deazaguanine + 2 NADPH + 3 H(+). The protein operates within tRNA modification; tRNA-queuosine biosynthesis. In terms of biological role, catalyzes the NADPH-dependent reduction of 7-cyano-7-deazaguanine (preQ0) to 7-aminomethyl-7-deazaguanine (preQ1). The protein is NADPH-dependent 7-cyano-7-deazaguanine reductase of Rickettsia felis (strain ATCC VR-1525 / URRWXCal2) (Rickettsia azadi).